The following is a 251-amino-acid chain: 5-oxoprolinase subunit A (251 aa).

Belongs to the LamB/PxpA family. As to quaternary structure, forms a complex composed of PxpA, PxpB and PxpC.

The catalysed reaction is 5-oxo-L-proline + ATP + 2 H2O = L-glutamate + ADP + phosphate + H(+). Its function is as follows. Catalyzes the cleavage of 5-oxoproline to form L-glutamate coupled to the hydrolysis of ATP to ADP and inorganic phosphate. The chain is 5-oxoprolinase subunit A from Vibrio campbellii (strain ATCC BAA-1116).